A 218-amino-acid polypeptide reads, in one-letter code: Imidazole glycerol phosphate synthase subunit HisH (218 aa).

The Glutamine amidotransferase type-1 domain maps to 12-218 (SIVVVDYGLG…RNFVDYCADQ (207 aa)). Cysteine 88 functions as the Nucleophile in the catalytic mechanism. Catalysis depends on residues histidine 196 and glutamate 198.

As to quaternary structure, heterodimer of HisH and HisF.

Its subcellular location is the cytoplasm. The enzyme catalyses 5-[(5-phospho-1-deoxy-D-ribulos-1-ylimino)methylamino]-1-(5-phospho-beta-D-ribosyl)imidazole-4-carboxamide + L-glutamine = D-erythro-1-(imidazol-4-yl)glycerol 3-phosphate + 5-amino-1-(5-phospho-beta-D-ribosyl)imidazole-4-carboxamide + L-glutamate + H(+). The catalysed reaction is L-glutamine + H2O = L-glutamate + NH4(+). The protein operates within amino-acid biosynthesis; L-histidine biosynthesis; L-histidine from 5-phospho-alpha-D-ribose 1-diphosphate: step 5/9. Functionally, IGPS catalyzes the conversion of PRFAR and glutamine to IGP, AICAR and glutamate. The HisH subunit catalyzes the hydrolysis of glutamine to glutamate and ammonia as part of the synthesis of IGP and AICAR. The resulting ammonia molecule is channeled to the active site of HisF. This is Imidazole glycerol phosphate synthase subunit HisH from Halobacterium salinarum (strain ATCC 700922 / JCM 11081 / NRC-1) (Halobacterium halobium).